Here is an 88-residue protein sequence, read N- to C-terminus: Probable Fe(2+)-trafficking protein (88 aa).

It belongs to the Fe(2+)-trafficking protein family.

In terms of biological role, could be a mediator in iron transactions between iron acquisition and iron-requiring processes, such as synthesis and/or repair of Fe-S clusters in biosynthetic enzymes. In Alkalilimnicola ehrlichii (strain ATCC BAA-1101 / DSM 17681 / MLHE-1), this protein is Probable Fe(2+)-trafficking protein.